The primary structure comprises 301 residues: Aspartate carbamoyltransferase catalytic subunit (301 aa).

Arginine 46 and threonine 47 together coordinate carbamoyl phosphate. Lysine 74 contributes to the L-aspartate binding site. Carbamoyl phosphate is bound by residues arginine 96, histidine 124, and glutamine 127. Positions 157 and 208 each coordinate L-aspartate. Carbamoyl phosphate-binding residues include alanine 249 and proline 250.

The protein belongs to the aspartate/ornithine carbamoyltransferase superfamily. ATCase family. As to quaternary structure, heterododecamer (2C3:3R2) of six catalytic PyrB chains organized as two trimers (C3), and six regulatory PyrI chains organized as three dimers (R2).

It carries out the reaction carbamoyl phosphate + L-aspartate = N-carbamoyl-L-aspartate + phosphate + H(+). It participates in pyrimidine metabolism; UMP biosynthesis via de novo pathway; (S)-dihydroorotate from bicarbonate: step 2/3. Its function is as follows. Catalyzes the condensation of carbamoyl phosphate and aspartate to form carbamoyl aspartate and inorganic phosphate, the committed step in the de novo pyrimidine nucleotide biosynthesis pathway. This is Aspartate carbamoyltransferase catalytic subunit from Bacillus cereus (strain ATCC 14579 / DSM 31 / CCUG 7414 / JCM 2152 / NBRC 15305 / NCIMB 9373 / NCTC 2599 / NRRL B-3711).